A 638-amino-acid chain; its full sequence is tRNA uridine 5-carboxymethylaminomethyl modification enzyme MnmG (638 aa).

Residues 15-20, isoleucine 127, and serine 182 each bind FAD; that span reads GAGHAG. Position 276–290 (276–290) interacts with NAD(+); that stretch reads GPRYCPSIEDKIVRF. Position 373 (glutamine 373) interacts with FAD.

It belongs to the MnmG family. As to quaternary structure, homodimer. Heterotetramer of two MnmE and two MnmG subunits. It depends on FAD as a cofactor.

It localises to the cytoplasm. Its function is as follows. NAD-binding protein involved in the addition of a carboxymethylaminomethyl (cmnm) group at the wobble position (U34) of certain tRNAs, forming tRNA-cmnm(5)s(2)U34. This is tRNA uridine 5-carboxymethylaminomethyl modification enzyme MnmG from Streptococcus suis (strain 98HAH33).